Here is a 316-residue protein sequence, read N- to C-terminus: Ribosomal RNA small subunit methyltransferase H (316 aa).

Residues 35–37 (SGH), D55, F84, D105, and Q112 contribute to the S-adenosyl-L-methionine site.

The protein belongs to the methyltransferase superfamily. RsmH family.

Its subcellular location is the cytoplasm. The catalysed reaction is cytidine(1402) in 16S rRNA + S-adenosyl-L-methionine = N(4)-methylcytidine(1402) in 16S rRNA + S-adenosyl-L-homocysteine + H(+). In terms of biological role, specifically methylates the N4 position of cytidine in position 1402 (C1402) of 16S rRNA. This is Ribosomal RNA small subunit methyltransferase H from Streptococcus equi subsp. zooepidemicus (strain H70).